Reading from the N-terminus, the 582-residue chain is GPI-anchor transamidase component PIGT (582 aa).

Residues Met1–Gly25 form the signal peptide. Topologically, residues Cys26–Pro529 are lumenal. A glycan (N-linked (GlcNAc...) asparagine) is linked at Asn168. Cystine bridges form between Cys199/Cys276 and Cys230/Cys235. N-linked (GlcNAc...) asparagine glycosylation is found at Asn295 and Asn331. Residues Asn465, Asp525, Ser527, and Asn531 each coordinate a 2-acyl-6-[6-phosphoethanolamine-alpha-D-mannosyl-(1-&gt;2)-6-phosphoethanolamine-alpha-D-mannosyl-(1-&gt;6)-2-phosphoethanolamine-alpha-D-mannosyl-(1-&gt;4)-alpha-D-glucosaminyl]-1-(1-radyl,2-acyl-sn-glycero-3-phospho)-1D-myo-inositol. A helical membrane pass occupies residues Tyr530–Thr552. The Cytoplasmic segment spans residues Arg553–Leu582.

The protein belongs to the PIGT family. In terms of assembly, heteropentamer. Part of the GPI-anchor transamidase complex, consisting of PIGK, PIGT, PIGS, PIGU and GAA1. In terms of processing, the disulfide bond between PIGK/GPI8 and PIGT is important for normal enzyme activity.

Its subcellular location is the endoplasmic reticulum membrane. It functions in the pathway glycolipid biosynthesis; glycosylphosphatidylinositol-anchor biosynthesis. Its function is as follows. Component of the glycosylphosphatidylinositol-anchor (GPI-anchor) transamidase (GPI-T) complex that catalyzes the formation of the linkage between a proprotein and a GPI-anchor and participates in GPI anchored protein biosynthesis. May play a crucial role in GPI-T complex assembly in the luminal layer. Binds GPI-anchor. The polypeptide is GPI-anchor transamidase component PIGT (Mus musculus (Mouse)).